Reading from the N-terminus, the 162-residue chain is Ribosomal RNA large subunit methyltransferase H (162 aa).

Residues Leu-78, Gly-109, and Leu-128–Leu-133 contribute to the S-adenosyl-L-methionine site.

Belongs to the RNA methyltransferase RlmH family. As to quaternary structure, homodimer.

It localises to the cytoplasm. The enzyme catalyses pseudouridine(1915) in 23S rRNA + S-adenosyl-L-methionine = N(3)-methylpseudouridine(1915) in 23S rRNA + S-adenosyl-L-homocysteine + H(+). In terms of biological role, specifically methylates the pseudouridine at position 1915 (m3Psi1915) in 23S rRNA. The polypeptide is Ribosomal RNA large subunit methyltransferase H (Psychrobacter sp. (strain PRwf-1)).